Consider the following 562-residue polypeptide: Calmodulin-binding protein 60 F (562 aa).

The interval 1-22 (MENSMNNRGHGHNQEHADNLPE) is disordered. The calmodulin-binding stretch occupies residues 5–84 (MNNRGHGHNQ…STSRSTEPNK (80 aa)). The segment covering 12-22 (HNQEHADNLPE) has biased composition (basic and acidic residues). The interval 154–273 (EDDKDWTREH…ALHKKLLKSN (120 aa)) is DNA-binding.

This sequence belongs to the plant ACBP60 protein family. In terms of assembly, interacts with calmodulin (CaM).

It localises to the nucleus. Transcription activator that binds DNA in a sequence-specific manner, likely 5'-GAAATTTTGG-3', to promote the expression of target genes. This Arabidopsis thaliana (Mouse-ear cress) protein is Calmodulin-binding protein 60 F.